The chain runs to 293 residues: Elongation factor Ts (293 aa).

The segment at 80–83 is involved in Mg(2+) ion dislocation from EF-Tu; that stretch reads TDFV.

Belongs to the EF-Ts family.

Its subcellular location is the cytoplasm. Associates with the EF-Tu.GDP complex and induces the exchange of GDP to GTP. It remains bound to the aminoacyl-tRNA.EF-Tu.GTP complex up to the GTP hydrolysis stage on the ribosome. This chain is Elongation factor Ts, found in Staphylococcus aureus (strain Newman).